Reading from the N-terminus, the 246-residue chain is Ribonuclease 3 (246 aa).

In terms of domain architecture, RNase III spans 16–144 (LLEFQKQAGL…VIGAYYIDSG (129 aa)). Residue Glu-57 coordinates Mg(2+). Asp-61 is an active-site residue. Residues Asp-130 and Glu-133 each contribute to the Mg(2+) site. Glu-133 is an active-site residue. The DRBM domain maps to 171–240 (DYKSLLQELV…AKVAYENLCS (70 aa)).

This sequence belongs to the ribonuclease III family. Homodimer. Mg(2+) is required as a cofactor.

Its subcellular location is the cytoplasm. It catalyses the reaction Endonucleolytic cleavage to 5'-phosphomonoester.. Functionally, digests double-stranded RNA. Involved in the processing of primary rRNA transcript to yield the immediate precursors to the large and small rRNAs (23S and 16S). Processes some mRNAs, and tRNAs when they are encoded in the rRNA operon. Processes pre-crRNA and tracrRNA of type II CRISPR loci if present in the organism. The sequence is that of Ribonuclease 3 from Treponema denticola (strain ATCC 35405 / DSM 14222 / CIP 103919 / JCM 8153 / KCTC 15104).